We begin with the raw amino-acid sequence, 323 residues long: Pyruvate dehydrogenase E1 component subunit beta (323 aa).

Glutamate 60 is a thiamine diphosphate binding site. Positions 113, 161, 162, 164, and 166 each coordinate K(+).

In terms of assembly, heterodimer of an alpha and a beta chain. It depends on thiamine diphosphate as a cofactor.

The protein resides in the plastid. It localises to the chloroplast. The catalysed reaction is N(6)-[(R)-lipoyl]-L-lysyl-[protein] + pyruvate + H(+) = N(6)-[(R)-S(8)-acetyldihydrolipoyl]-L-lysyl-[protein] + CO2. The pyruvate dehydrogenase complex catalyzes the overall conversion of pyruvate to acetyl-CoA and CO(2). It contains multiple copies of three enzymatic components: pyruvate dehydrogenase (E1), dihydrolipoamide acetyltransferase (E2) and lipoamide dehydrogenase (E3). The polypeptide is Pyruvate dehydrogenase E1 component subunit beta (pdhB) (Gracilaria tenuistipitata var. liui (Red alga)).